We begin with the raw amino-acid sequence, 213 residues long: Probable chemoreceptor glutamine deamidase CheD (213 aa).

A compositionally biased stretch (basic residues) spans 1–12 (MNRHRPHSHRSK). Residues 1-25 (MNRHRPHSHRSKPASTQDQPDSVRR) form a disordered region.

Belongs to the CheD family.

The catalysed reaction is L-glutaminyl-[protein] + H2O = L-glutamyl-[protein] + NH4(+). Functionally, probably deamidates glutamine residues to glutamate on methyl-accepting chemotaxis receptors (MCPs), playing an important role in chemotaxis. The sequence is that of Probable chemoreceptor glutamine deamidase CheD from Rhodopseudomonas palustris (strain BisA53).